A 1064-amino-acid chain; its full sequence is MVKQLQEQEENDPVEKTKSLISALNYLSRDLLLPSHLYASVSSIYHASVSDLSPSPPLRGNSYTPNRGDLMSEFEDALLQQRLNYESGSRLAELKETRYKNRIHNRLSQLEGLPSNRGEDLQEKCLLELYGLKLQELQCRVRGEVSAEYWLRLNCADPERQLYDWGMMRLPRRMYGVGDSFVMEADDQFRNKRDAERLLRLEEEEKNLIETTQRKFFAEVLNAVREFQLQIQASHRRCKQRNDGVQAWHGKQRQRATRAEKLRIMALKSDDQEEYMKLAKESKNEKLTLFLEETNKIFVSLGAAVQRQKDAKLSENTKLLKGSESDLSDVDAPEDVLPAQDIEIIDSDNNDDSNDLLEGERQFNLAIHSIQEKVTKQPSLLQGGELRSYQLEGLQWMVSLYNNDYNGILADEMGLGKTIQTIALIAYLLESKDLHGPHLILAPKAVLPNWENEFALWAPSISAFLYDGSKEKRTEIRARIAGGKFNVLITHYDLIMRDKAFLKKIDWNYMIVDEGHRLKNHECALAKTLGTGYRIKRRLLLTGTPIQNSLQELWSLLNFLLPHIFNSIHNFEEWFNTPFAECGSASLTDEEELLIINRLHHVIRPFLLRRKKSEVEKFLPGKTQVILKCDMSAWQKLYYKQVTDVGRVGLHSGNGKSKSLQNLTMQLRKCCNHPYLFVGADYNMCKKPEIVRASGKFELLDRLLPKLKKAGHRILLFSQMTRLIDLLEIYLSLNDYMYLRLDGSTKTDQRGILLKQFNEPDSPYFMFLLSTRAGGLGLNLQTADTIIIFDSDWNPQMDQQAEDRAHRIGQKKEVRVFVLVSIGSIEEVILERAKQKMGIDAKVIQAGLFNTTSTAQDRREMLEEIMSKGTSSLGEDVPSEREINRLAARTEEEFWMFEQMDEERRKKENYKTRLMEEKEVPEWAYTSETQEDKTNAKNHFGSLTGKRKRKEAVYSDSLSDLQWMKAMESEDEDASKVSQKRKRTDTKTRMSNGSKAEAVLSESDEEKEEEEEERKEESGKESEEENEKPLHSWKTNKKKRSRYPVMTSSPNSRGKGSSKGSKRN.

The region spanning 398–563 is the Helicase ATP-binding domain; sequence VSLYNNDYNG…WSLLNFLLPH (166 aa). 411–418 provides a ligand contact to ATP; that stretch reads DEMGLGKT. Positions 513–516 match the DEAH box motif; the sequence is DEGH. In terms of domain architecture, Helicase C-terminal spans 699–866; it reads LLDRLLPKLK…DRREMLEEIM (168 aa). Disordered regions lie at residues 924–955 and 967–1064; these read AYTS…AVYS and MESE…SKRN. Residues 1002–1014 show a composition bias toward acidic residues; the sequence is ESDEEKEEEEEER. The span at 1048 to 1064 shows a compositional bias: low complexity; it reads SSPNSRGKGSSKGSKRN.

This sequence belongs to the helicase family. As to expression, expressed in embryos, root apical meristem (RAM) and shoot apical meristem (SAM).

It is found in the nucleus. The catalysed reaction is ATP + H2O = ADP + phosphate + H(+). In terms of biological role, probable chromatin-remodeling factor that is functionally redundant with CHR12 in root and shoot stem cell initiation and root apical meristem (RAM) and shoot apical meristem (SAM) maintenance. Can associate with the promoter region of WOX5. May promote seed maturation and repress initiation of germination. May repress plant growth. The chain is Probable ATP-dependent DNA helicase CHR23 from Arabidopsis thaliana (Mouse-ear cress).